A 146-amino-acid polypeptide reads, in one-letter code: Hemoglobin subunit beta (146 aa).

N-acetylvaline is present on Val1. Residues 2–146 (HLTDAEKNLV…VANALAHKYH (145 aa)) form the Globin domain. Residue His63 coordinates heme b. Lys82 bears the N6-acetyllysine mark. His92 is a binding site for heme b. Residue Cys93 is modified to S-nitrosocysteine. Lys144 carries the N6-acetyllysine modification.

The protein belongs to the globin family. In terms of assembly, heterotetramer of two alpha chains and two beta chains. In terms of tissue distribution, red blood cells.

Functionally, involved in oxygen transport from the lung to the various peripheral tissues. This Mesocricetus brandti (Brandt's hamster) protein is Hemoglobin subunit beta (HBB).